Here is a 249-residue protein sequence, read N- to C-terminus: 5'-nucleotidase SurE (249 aa).

A divalent metal cation contacts are provided by Asp-8, Asp-9, Ser-39, and Asn-91.

Belongs to the SurE nucleotidase family. A divalent metal cation is required as a cofactor.

It is found in the cytoplasm. It catalyses the reaction a ribonucleoside 5'-phosphate + H2O = a ribonucleoside + phosphate. Functionally, nucleotidase that shows phosphatase activity on nucleoside 5'-monophosphates. This Pseudomonas paraeruginosa (strain DSM 24068 / PA7) (Pseudomonas aeruginosa (strain PA7)) protein is 5'-nucleotidase SurE.